A 447-amino-acid polypeptide reads, in one-letter code: Pentatricopeptide repeat-containing protein At3g53170 (447 aa).

10 PPR repeats span residues 93–127 (RCKTYTKLFKVLGNCKQPDQASLLFEVMLSEGLKP), 128–158 (TIDVYTSLISVYGKSELLDKAFSTLEYMKSV), 164–198 (DVFTFTVLISCCCKLGRFDLVKSIVLEMSYLGVGC), 199–233 (STVTYNTIIDGYGKAGMFEEMESVLADMIEDGDSL), 235–269 (DVCTLNSIIGSYGNGRNMRKMESWYSRFQLMGVQP), 270–304 (DITTFNILILSFGKAGMYKKMCSVMDFMEKRFFSL), 305–339 (TTVTYNIVIETFGKAGRIEKMDDVFRKMKYQGVKP), 340–374 (NSITYCSLVNAYSKAGLVVKIDSVLRQIVNSDVVL), 375–409 (DTPFFNCIINAYGQAGDLATMKELYIQMEERKCKP), and 410–444 (DKITFATMIKTYTAHGIFDAVQELEKQMISSGENL).

It belongs to the PPR family. P subfamily.

The chain is Pentatricopeptide repeat-containing protein At3g53170 from Arabidopsis thaliana (Mouse-ear cress).